Reading from the N-terminus, the 304-residue chain is Acetylglutamate kinase (304 aa).

Substrate contacts are provided by residues 77-78 (GG), Arg99, and Asn201.

The protein belongs to the acetylglutamate kinase family. ArgB subfamily.

The protein resides in the cytoplasm. It carries out the reaction N-acetyl-L-glutamate + ATP = N-acetyl-L-glutamyl 5-phosphate + ADP. The protein operates within amino-acid biosynthesis; L-arginine biosynthesis; N(2)-acetyl-L-ornithine from L-glutamate: step 2/4. Its function is as follows. Catalyzes the ATP-dependent phosphorylation of N-acetyl-L-glutamate. The protein is Acetylglutamate kinase of Methylibium petroleiphilum (strain ATCC BAA-1232 / LMG 22953 / PM1).